We begin with the raw amino-acid sequence, 301 residues long: MSEDIRRGPGRPPKKRVVPNFERKGILEKPVRPQSRLEFSYDNPLIFKNLFIYFKNLKSKNILVRCTPTEITFFSRDQSQASFVIATIDGKNVNHYYASDVFWLGINRELVEKMFNSIDRSFLKITIVHRYDKPETLFFIFTDFDIDKECTYHITVSEPELDMDLIEMEKSISEERLKNYPLRWEFTSKQLKKTFSDLSNYTELVTIEKLGGDTPLHLYFQKFNSISYHEMYKSSNKINLTSTIPKSQVFQINVKIAHIKSLASAMVTDKIRILCEENGNLIFQSEMDALMLNTITLNNMI.

This sequence belongs to the asfivirus E301R family. In terms of assembly, interacts with host IRF3.

Functionally, plays a role in the inhibition of host innate immune system by acting as a negatively regulator of type I interferon production. Mechanistically, interacts with and prevents host IRF3 nuclear localization to inhibit its transcriptional activity. This is an uncharacterized protein from African swine fever virus (isolate Tick/South Africa/Pretoriuskop Pr4/1996) (ASFV).